The sequence spans 71 residues: DNA-directed RNA polymerase subunit omega (71 aa).

It belongs to the RNA polymerase subunit omega family. In terms of assembly, the RNAP catalytic core consists of 2 alpha, 1 beta, 1 beta' and 1 omega subunit. When a sigma factor is associated with the core the holoenzyme is formed, which can initiate transcription.

The enzyme catalyses RNA(n) + a ribonucleoside 5'-triphosphate = RNA(n+1) + diphosphate. In terms of biological role, promotes RNA polymerase assembly. Latches the N- and C-terminal regions of the beta' subunit thereby facilitating its interaction with the beta and alpha subunits. The chain is DNA-directed RNA polymerase subunit omega from Azoarcus sp. (strain BH72).